Reading from the N-terminus, the 135-residue chain is Fluoride-specific ion channel FluC 2 (135 aa).

4 helical membrane passes run 5 to 25 (VLAAVAAGGALGALARAGLLA), 36 to 56 (WGTVLVNVLGCALIGVLMETL), 68 to 88 (PFLGVGVLGGFTTFSAAITDA), and 100 to 120 (ALLAIAANLIGALLAVSAAAG). Residues Gly76 and Thr79 each coordinate Na(+).

This sequence belongs to the fluoride channel Fluc/FEX (TC 1.A.43) family.

Its subcellular location is the cell membrane. The enzyme catalyses fluoride(in) = fluoride(out). With respect to regulation, na(+) is not transported, but it plays an essential structural role and its presence is essential for fluoride channel function. Fluoride-specific ion channel. Important for reducing fluoride concentration in the cell, thus reducing its toxicity. The protein is Fluoride-specific ion channel FluC 2 of Thermobifida fusca (strain YX).